A 137-amino-acid chain; its full sequence is Large-conductance mechanosensitive channel (137 aa).

The next 2 membrane-spanning stretches (helical) occupy residues phenylalanine 10–glycine 30 and glycine 76–isoleucine 96.

Belongs to the MscL family. As to quaternary structure, homopentamer.

It is found in the cell inner membrane. Its function is as follows. Channel that opens in response to stretch forces in the membrane lipid bilayer. May participate in the regulation of osmotic pressure changes within the cell. This is Large-conductance mechanosensitive channel from Salmonella typhimurium (strain LT2 / SGSC1412 / ATCC 700720).